We begin with the raw amino-acid sequence, 96 residues long: Protein transport protein Sec61 subunit beta (96 aa).

Residues 1–17 (MPGPTPSGTNVGSSGRS) show a composition bias toward polar residues. Residues 1–54 (MPGPTPSGTNVGSSGRSPSKAVAARAAGSTVRQRKNASCGTRSAGRTTSAGTGG) are disordered. Position 2 is an N-acetylproline (Pro2). Residues 2–71 (PGPTPSGTNV…DSPGLKVGPV (70 aa)) are Cytoplasmic-facing. A Phosphoserine modification is found at Ser7. Residue Thr9 is modified to Phosphothreonine. Ser13, Ser14, and Ser17 each carry phosphoserine. Cys39 carries S-palmitoyl cysteine lipidation. Residues 40 to 50 (GTRSAGRTTSA) are compositionally biased toward low complexity. Residues 72–91 (PVLVMSLLFIASVFMLHIWG) traverse the membrane as a helical segment. The Lumenal segment spans residues 92 to 96 (KYTRS).

Belongs to the SEC61-beta family. The SEC61 channel-forming translocon complex consists of channel-forming core components SEC61A1, SEC61B and SEC61G and different auxiliary components such as SEC62 and SEC63. The SEC61 channel associates with the multi-pass translocon (MPT) complex. Interacts with TRAM1.

Its subcellular location is the endoplasmic reticulum membrane. Component of SEC61 channel-forming translocon complex that mediates transport of signal peptide-containing precursor polypeptides across the endoplasmic reticulum (ER). Forms a ribosome receptor and a gated pore in the ER membrane, both functions required for cotranslational translocation of nascent polypeptides. The SEC61 channel is also involved in ER membrane insertion of transmembrane proteins: it mediates membrane insertion of the first few transmembrane segments of proteins, while insertion of subsequent transmembrane regions of multi-pass membrane proteins is mediated by the multi-pass translocon (MPT) complex. The SEC61 channel cooperates with the translocating protein TRAM1 to import nascent proteins into the ER. The protein is Protein transport protein Sec61 subunit beta (SEC61B) of Canis lupus familiaris (Dog).